We begin with the raw amino-acid sequence, 288 residues long: Probable coatomer subunit epsilon (288 aa).

Residue S262 is modified to Phosphoserine.

The protein belongs to the COPE family. As to quaternary structure, oligomeric complex that consists of at least the alpha, beta, beta', gamma, delta, epsilon and zeta subunits.

The protein resides in the cytoplasm. It is found in the golgi apparatus membrane. It localises to the cytoplasmic vesicle. Its subcellular location is the COPI-coated vesicle membrane. In terms of biological role, the coatomer is a cytosolic protein complex that binds to dilysine motifs and reversibly associates with Golgi non-clathrin-coated vesicles, which further mediate biosynthetic protein transport from the ER, via the Golgi up to the trans Golgi network. The coatomer complex is required for budding from Golgi membranes, and is essential for the retrograde Golgi-to-ER transport of dilysine-tagged proteins. This chain is Probable coatomer subunit epsilon (sec28), found in Schizosaccharomyces pombe (strain 972 / ATCC 24843) (Fission yeast).